Reading from the N-terminus, the 457-residue chain is Siroheme synthase (457 aa).

The precorrin-2 dehydrogenase /sirohydrochlorin ferrochelatase stretch occupies residues 1 to 204 (MDHLPIFCQL…NDQKAITETT (204 aa)). NAD(+) contacts are provided by residues 22–23 (DV) and 43–44 (LA). The residue at position 128 (Ser128) is a Phosphoserine. Residues 216–457 (GEVVLVGAGP…RDKLNWFSNH (242 aa)) are uroporphyrinogen-III C-methyltransferase. Pro225 lines the S-adenosyl-L-methionine pocket. The active-site Proton acceptor is Asp248. Lys270 acts as the Proton donor in catalysis. S-adenosyl-L-methionine is bound by residues 301–303 (GGD), Ile306, 331–332 (TA), Met382, and Gly411.

In the N-terminal section; belongs to the precorrin-2 dehydrogenase / sirohydrochlorin ferrochelatase family. It in the C-terminal section; belongs to the precorrin methyltransferase family.

The enzyme catalyses uroporphyrinogen III + 2 S-adenosyl-L-methionine = precorrin-2 + 2 S-adenosyl-L-homocysteine + H(+). It catalyses the reaction precorrin-2 + NAD(+) = sirohydrochlorin + NADH + 2 H(+). It carries out the reaction siroheme + 2 H(+) = sirohydrochlorin + Fe(2+). It participates in cofactor biosynthesis; adenosylcobalamin biosynthesis; precorrin-2 from uroporphyrinogen III: step 1/1. It functions in the pathway cofactor biosynthesis; adenosylcobalamin biosynthesis; sirohydrochlorin from precorrin-2: step 1/1. The protein operates within porphyrin-containing compound metabolism; siroheme biosynthesis; precorrin-2 from uroporphyrinogen III: step 1/1. Its pathway is porphyrin-containing compound metabolism; siroheme biosynthesis; siroheme from sirohydrochlorin: step 1/1. It participates in porphyrin-containing compound metabolism; siroheme biosynthesis; sirohydrochlorin from precorrin-2: step 1/1. Its function is as follows. Multifunctional enzyme that catalyzes the SAM-dependent methylations of uroporphyrinogen III at position C-2 and C-7 to form precorrin-2 via precorrin-1. Then it catalyzes the NAD-dependent ring dehydrogenation of precorrin-2 to yield sirohydrochlorin. Finally, it catalyzes the ferrochelation of sirohydrochlorin to yield siroheme. The chain is Siroheme synthase from Escherichia coli O81 (strain ED1a).